Reading from the N-terminus, the 200-residue chain is Putative NAD(P)H nitroreductase Spy0809 (200 aa).

It depends on FMN as a cofactor.

The polypeptide is Putative NAD(P)H nitroreductase Spy0809 (Streptococcus pyogenes serotype M6 (strain ATCC BAA-946 / MGAS10394)).